Consider the following 199-residue polypeptide: Potassium-transporting ATPase KdpC subunit (199 aa).

The helical transmembrane segment at 7–27 (PALVMTAALCLITGIIYPGLI) threads the bilayer.

It belongs to the KdpC family. In terms of assembly, the system is composed of three essential subunits: KdpA, KdpB and KdpC.

Its subcellular location is the cell inner membrane. Its function is as follows. Part of the high-affinity ATP-driven potassium transport (or Kdp) system, which catalyzes the hydrolysis of ATP coupled with the electrogenic transport of potassium into the cytoplasm. This subunit acts as a catalytic chaperone that increases the ATP-binding affinity of the ATP-hydrolyzing subunit KdpB by the formation of a transient KdpB/KdpC/ATP ternary complex. The chain is Potassium-transporting ATPase KdpC subunit from Gemmatimonas aurantiaca (strain DSM 14586 / JCM 11422 / NBRC 100505 / T-27).